Here is a 199-residue protein sequence, read N- to C-terminus: 7-methyl-GTP pyrophosphatase (199 aa).

Residue aspartate 76 is the Proton acceptor of the active site.

This sequence belongs to the Maf family. YceF subfamily. A divalent metal cation is required as a cofactor.

Its subcellular location is the cytoplasm. It carries out the reaction N(7)-methyl-GTP + H2O = N(7)-methyl-GMP + diphosphate + H(+). Functionally, nucleoside triphosphate pyrophosphatase that hydrolyzes 7-methyl-GTP (m(7)GTP). May have a dual role in cell division arrest and in preventing the incorporation of modified nucleotides into cellular nucleic acids. This Rhizobium etli (strain ATCC 51251 / DSM 11541 / JCM 21823 / NBRC 15573 / CFN 42) protein is 7-methyl-GTP pyrophosphatase.